The chain runs to 366 residues: Histidinol-phosphate aminotransferase (366 aa).

Lys228 is modified (N6-(pyridoxal phosphate)lysine).

This sequence belongs to the class-II pyridoxal-phosphate-dependent aminotransferase family. Histidinol-phosphate aminotransferase subfamily. As to quaternary structure, homodimer. It depends on pyridoxal 5'-phosphate as a cofactor.

The enzyme catalyses L-histidinol phosphate + 2-oxoglutarate = 3-(imidazol-4-yl)-2-oxopropyl phosphate + L-glutamate. It functions in the pathway amino-acid biosynthesis; L-histidine biosynthesis; L-histidine from 5-phospho-alpha-D-ribose 1-diphosphate: step 7/9. The polypeptide is Histidinol-phosphate aminotransferase (Corynebacterium glutamicum (strain ATCC 13032 / DSM 20300 / JCM 1318 / BCRC 11384 / CCUG 27702 / LMG 3730 / NBRC 12168 / NCIMB 10025 / NRRL B-2784 / 534)).